The chain runs to 367 residues: Quinolinate synthase (367 aa).

Positions 45 and 62 each coordinate iminosuccinate. Cysteine 109 is a [4Fe-4S] cluster binding site. Residues 140–142 and serine 161 each bind iminosuccinate; that span reads YVN. Residue cysteine 229 participates in [4Fe-4S] cluster binding. Iminosuccinate contacts are provided by residues 255–257 and threonine 272; that span reads HPE. Cysteine 319 is a [4Fe-4S] cluster binding site.

This sequence belongs to the quinolinate synthase family. Type 3 subfamily. [4Fe-4S] cluster serves as cofactor.

It localises to the cytoplasm. The catalysed reaction is iminosuccinate + dihydroxyacetone phosphate = quinolinate + phosphate + 2 H2O + H(+). It functions in the pathway cofactor biosynthesis; NAD(+) biosynthesis; quinolinate from iminoaspartate: step 1/1. In terms of biological role, catalyzes the condensation of iminoaspartate with dihydroxyacetone phosphate to form quinolinate. The polypeptide is Quinolinate synthase (Halalkalibacterium halodurans (strain ATCC BAA-125 / DSM 18197 / FERM 7344 / JCM 9153 / C-125) (Bacillus halodurans)).